The sequence spans 828 residues: Outer membrane usher protein PmfC (828 aa).

The signal sequence occupies residues 1–28 (MLIPYSPHTIWKTICATLLLSLAFFSQA).

It belongs to the fimbrial export usher family.

It localises to the cell outer membrane. Its function is as follows. Involved in the export and assembly of PMF fimbrial subunits across the outer membrane. The protein is Outer membrane usher protein PmfC (pmfC) of Proteus mirabilis (strain HI4320).